Consider the following 141-residue polypeptide: Hemoglobin subunit alpha (141 aa).

Positions 1–141 (VLSAKDKTNI…VSTVLTSKYR (141 aa)) constitute a Globin domain. Ser3 is subject to Phosphoserine. Lys7 is modified (N6-succinyllysine). Thr8 carries the post-translational modification Phosphothreonine. An N6-acetyllysine; alternate modification is found at Lys16. N6-succinyllysine; alternate is present on Lys16. Tyr24 carries the post-translational modification Phosphotyrosine. Lys40 carries the post-translational modification N6-succinyllysine. Phosphoserine is present on Ser49. An O2-binding site is contributed by His58. His87 serves as a coordination point for heme b. A Phosphoserine modification is found at Ser102. Thr108 is modified (phosphothreonine). Phosphoserine is present on residues Ser124 and Ser131. Phosphothreonine is present on residues Thr134 and Thr137. The residue at position 138 (Ser138) is a Phosphoserine.

The protein belongs to the globin family. In terms of assembly, heterotetramer of two alpha chains and two beta chains. In terms of tissue distribution, red blood cells.

Its function is as follows. Involved in oxygen transport from the lung to the various peripheral tissues. Hemopressin acts as an antagonist peptide of the cannabinoid receptor CNR1. Hemopressin-binding efficiently blocks cannabinoid receptor CNR1 and subsequent signaling. The protein is Hemoglobin subunit alpha (HBA) of Mesocricetus auratus (Golden hamster).